Consider the following 287-residue polypeptide: MPKINTSSSGWLADISLFYERRGTNTKLVHREQVGPLMVQRPFYPETGVAHTYLLHPPGGVVGGDQLNINIHVSPQAHSLLTTPGATKFYRSSGAISSQTQNLTVESDGFLEWLPQENIFFPDSQAQLKTQVELHKDAHFIGWEMNCFGRPVLNEIFENGFVTGRTNIKVDDQLLLSESMYIDSIDEIKHAAGMRHYPMLGNLYIYPASEALEEKLRTLIDENFHEQPELFGSSNPICGITEIDGLLVIRYLGHQTEPMMACFSTLWQHTRQHWLGKLPEVPRIWAT.

The protein belongs to the UreD family. As to quaternary structure, ureD, UreF and UreG form a complex that acts as a GTP-hydrolysis-dependent molecular chaperone, activating the urease apoprotein by helping to assemble the nickel containing metallocenter of UreC. The UreE protein probably delivers the nickel.

It is found in the cytoplasm. In terms of biological role, required for maturation of urease via the functional incorporation of the urease nickel metallocenter. This chain is Urease accessory protein UreD, found in Aliivibrio fischeri (strain MJ11) (Vibrio fischeri).